The following is a 174-amino-acid chain: Large ribosomal subunit protein uL18 (174 aa).

The protein belongs to the universal ribosomal protein uL18 family. As to quaternary structure, part of the 50S ribosomal subunit. Contacts the 5S and 23S rRNAs.

Functionally, this is one of the proteins that bind and probably mediate the attachment of the 5S RNA into the large ribosomal subunit, where it forms part of the central protuberance. The chain is Large ribosomal subunit protein uL18 from Methanosarcina barkeri (strain Fusaro / DSM 804).